The chain runs to 87 residues: Small ribosomal subunit protein uS17 (87 aa).

Belongs to the universal ribosomal protein uS17 family. In terms of assembly, part of the 30S ribosomal subunit.

Functionally, one of the primary rRNA binding proteins, it binds specifically to the 5'-end of 16S ribosomal RNA. The polypeptide is Small ribosomal subunit protein uS17 (Thiobacillus denitrificans (strain ATCC 25259 / T1)).